The following is a 476-amino-acid chain: Angiotensinogen (476 aa).

An N-terminal signal peptide occupies residues 1–24; sequence MAPAGMSLRATILCLLAWAGLAAG. 4 N-linked (GlcNAc...) asparagine glycosylation sites follow: N38, N161, N295, and N319. A disulfide bridge links C42 with C162.

The protein belongs to the serpin family. In response to low blood pressure, the enzyme renin/REN cleaves angiotensinogen to produce angiotensin-1. Angiotensin-1 is a substrate of ACE (angiotensin converting enzyme) that removes a dipeptide to yield the physiologically active peptide angiotensin-2. Angiotensin-1 and angiotensin-2 can be further processed to generate angiotensin-3, angiotensin-4. Angiotensin 1-9 is cleaved from angiotensin-1 by ACE2 and can be further processed by ACE to produce angiotensin 1-7, angiotensin 1-5 and angiotensin 1-4. Angiotensin 1-7 has also been proposed to be cleaved from angiotensin-2 by ACE2 or from angiotensin-1 by MME (neprilysin). Post-translationally, the disulfide bond is labile. Angiotensinogen is present in the circulation in a near 40:60 ratio with the oxidized disulfide-bonded form, which preferentially interacts with receptor-bound renin.

The protein resides in the secreted. Its function is as follows. Essential component of the renin-angiotensin system (RAS), a potent regulator of blood pressure, body fluid and electrolyte homeostasis. Functionally, acts directly on vascular smooth muscle as a potent vasoconstrictor, affects cardiac contractility and heart rate through its action on the sympathetic nervous system, and alters renal sodium and water absorption through its ability to stimulate the zona glomerulosa cells of the adrenal cortex to synthesize and secrete aldosterone. Acts by binding to angiotensin receptors AGTR1 and AGTR2. Also binds the DEAR/FBXW7-AS1 receptor. In terms of biological role, stimulates aldosterone release. Is a ligand for the G-protein coupled receptor MAS1. Has vasodilator and antidiuretic effects. Has an antithrombotic effect that involves MAS1-mediated release of nitric oxide from platelets. The polypeptide is Angiotensinogen (AGT) (Gorilla gorilla gorilla (Western lowland gorilla)).